The following is a 134-amino-acid chain: ATP synthase epsilon chain (134 aa).

The protein belongs to the ATPase epsilon chain family. In terms of assembly, F-type ATPases have 2 components, CF(1) - the catalytic core - and CF(0) - the membrane proton channel. CF(1) has five subunits: alpha(3), beta(3), gamma(1), delta(1), epsilon(1). CF(0) has three main subunits: a, b and c.

It is found in the cell membrane. Functionally, produces ATP from ADP in the presence of a proton gradient across the membrane. This is ATP synthase epsilon chain from Listeria monocytogenes serotype 4b (strain F2365).